We begin with the raw amino-acid sequence, 693 residues long: UvrABC system protein B (693 aa).

Residues E35–I188 form the Helicase ATP-binding domain. G48 to S55 is a binding site for ATP. A Beta-hairpin motif is present at residues Y101–V124. Residues Q438–I600 form the Helicase C-terminal domain. The interval A612–V634 is disordered. The UVR domain maps to V648–E683.

It belongs to the UvrB family. As to quaternary structure, forms a heterotetramer with UvrA during the search for lesions. Interacts with UvrC in an incision complex.

It is found in the cytoplasm. The UvrABC repair system catalyzes the recognition and processing of DNA lesions. A damage recognition complex composed of 2 UvrA and 2 UvrB subunits scans DNA for abnormalities. Upon binding of the UvrA(2)B(2) complex to a putative damaged site, the DNA wraps around one UvrB monomer. DNA wrap is dependent on ATP binding by UvrB and probably causes local melting of the DNA helix, facilitating insertion of UvrB beta-hairpin between the DNA strands. Then UvrB probes one DNA strand for the presence of a lesion. If a lesion is found the UvrA subunits dissociate and the UvrB-DNA preincision complex is formed. This complex is subsequently bound by UvrC and the second UvrB is released. If no lesion is found, the DNA wraps around the other UvrB subunit that will check the other stand for damage. This is UvrABC system protein B from Renibacterium salmoninarum (strain ATCC 33209 / DSM 20767 / JCM 11484 / NBRC 15589 / NCIMB 2235).